Here is a 61-residue protein sequence, read N- to C-terminus: Short neurotoxin 2 (61 aa).

Cystine bridges form between C3–C23, C17–C40, C42–C53, and C54–C59.

The protein belongs to the three-finger toxin family. Short-chain subfamily. Type I alpha-neurotoxin sub-subfamily. In terms of tissue distribution, expressed by the venom gland.

The protein resides in the secreted. Functionally, binds to muscle nicotinic acetylcholine receptor (nAChR) and inhibit acetylcholine from binding to the receptor, thereby impairing neuromuscular transmission. This chain is Short neurotoxin 2, found in Hemachatus haemachatus (Rinkhals).